The sequence spans 77 residues: Acyl carrier protein (77 aa).

Residues 1-76 (MENFDKVKDI…DAVKYINSLE (76 aa)) enclose the Carrier domain. Ser-36 is subject to O-(pantetheine 4'-phosphoryl)serine.

It belongs to the acyl carrier protein (ACP) family. Post-translationally, 4'-phosphopantetheine is transferred from CoA to a specific serine of apo-ACP by AcpS. This modification is essential for activity because fatty acids are bound in thioester linkage to the sulfhydryl of the prosthetic group.

The protein localises to the cytoplasm. The protein operates within lipid metabolism; fatty acid biosynthesis. Carrier of the growing fatty acid chain in fatty acid biosynthesis. The sequence is that of Acyl carrier protein from Staphylococcus epidermidis (strain ATCC 12228 / FDA PCI 1200).